Reading from the N-terminus, the 927-residue chain is Protein translocase subunit SecA (927 aa).

ATP is bound by residues glutamine 86, glycine 104–threonine 108, and aspartate 494. The interval tyrosine 853–arginine 927 is disordered. A compositionally biased stretch (basic and acidic residues) spans glycine 860–glutamate 879. Residues arginine 907–arginine 927 show a composition bias toward basic residues.

Belongs to the SecA family. As to quaternary structure, monomer and homodimer. Part of the essential Sec protein translocation apparatus which comprises SecA, SecYEG and auxiliary proteins SecDF. Other proteins may also be involved.

The protein resides in the cell membrane. It is found in the cytoplasm. It carries out the reaction ATP + H2O + cellular proteinSide 1 = ADP + phosphate + cellular proteinSide 2.. In terms of biological role, part of the Sec protein translocase complex. Interacts with the SecYEG preprotein conducting channel. Has a central role in coupling the hydrolysis of ATP to the transfer of proteins into and across the cell membrane, serving as an ATP-driven molecular motor driving the stepwise translocation of polypeptide chains across the membrane. In Kocuria rhizophila (strain ATCC 9341 / DSM 348 / NBRC 103217 / DC2201), this protein is Protein translocase subunit SecA.